Consider the following 679-residue polypeptide: MKLSLPALRNTPWFKATSGQWRYALRNTIAMCLALTFAYYLNLDEPYWAMTSAAVVSFPTVGGVISKSLGRIAGSLLGATAALIIAGHTLNEPWLFLFSMAAWIGFCTWACAHFTNNAAYAFQLSGYTAAIIAFPMVNIVEITQLWDIAQARVCEVIVGILCGGMMMMILPSTSDGTALLTAFKNMHARLLEHASLLWQPETTDAIRSAHEGVIGQILTMNLLRIQAFWSHYRFRRQNALLNALLHQQLRLTSVISSLRRMLLNWPTPPENSREVIEQLLAELAKPRADSYTVAQIIAPLRPQDEQDYRHLAFWQRLRYFCQLYLRSSRQLYLIESGAPVDQIHIRRTPGLARHTDNAEAIWSGVRTFCTLTVIGAWSIGAQWESGPGALTLAAISCVLYSIVATPFKSLSLLMRTLVLLSLFSFVVKFGLMVQITDLWQFLLFLFPLFVTMQLLKLQMPKLAGLWGQLIVFMGSFIAVTNPPVYDFADFLNDNTAKIVGVAISWLAFAILRPGSDAVKSRRHIRALRRDFVDQLSRHPSHNESEFESLTYHHVSQLSNSQDALARRWLLRWGVVLLNCSHVVWQLRAWESRSDPLSRVRDICISLLRDVMSERGVQQRPLAVTLQELQRICDTLAHHHQPAAHELAAIIWRLHCSLSQLEQAPAQGTLAPGYLMTPQA.

Transmembrane regions (helical) follow at residues 23–41 (YALR…AYYL), 46–65 (PYWA…GGVI), 72–90 (IAGS…GHTL), 94–113 (WLFL…ACAH), 120–142 (YAFQ…IVEI), 157–179 (IVGI…GTAL), 362–381 (WSGV…SIGA), 385–404 (SGPG…SIVA), 411–433 (SLLM…GLMV), 438–455 (LWQF…MQLL), 462–481 (LAGL…AVTN), and 496–515 (AKIV…RPGS).

This sequence belongs to the aromatic acid exporter ArAE (TC 2.A.85) family.

The protein resides in the cell membrane. This is an uncharacterized protein from Salmonella typhimurium (strain LT2 / SGSC1412 / ATCC 700720).